The chain runs to 230 residues: 5'-methylthioadenosine/S-adenosylhomocysteine nucleosidase (230 aa).

Glutamate 12 (proton acceptor) is an active-site residue. Residues glycine 78, isoleucine 152, and 173–174 (ME) contribute to the substrate site. The active-site Proton donor is the aspartate 197.

This sequence belongs to the PNP/UDP phosphorylase family. MtnN subfamily.

It carries out the reaction S-adenosyl-L-homocysteine + H2O = S-(5-deoxy-D-ribos-5-yl)-L-homocysteine + adenine. The catalysed reaction is S-methyl-5'-thioadenosine + H2O = 5-(methylsulfanyl)-D-ribose + adenine. The enzyme catalyses 5'-deoxyadenosine + H2O = 5-deoxy-D-ribose + adenine. The protein operates within amino-acid biosynthesis; L-methionine biosynthesis via salvage pathway; S-methyl-5-thio-alpha-D-ribose 1-phosphate from S-methyl-5'-thioadenosine (hydrolase route): step 1/2. In terms of biological role, catalyzes the irreversible cleavage of the glycosidic bond in both 5'-methylthioadenosine (MTA) and S-adenosylhomocysteine (SAH/AdoHcy) to adenine and the corresponding thioribose, 5'-methylthioribose and S-ribosylhomocysteine, respectively. Also cleaves 5'-deoxyadenosine, a toxic by-product of radical S-adenosylmethionine (SAM) enzymes, into 5-deoxyribose and adenine. The polypeptide is 5'-methylthioadenosine/S-adenosylhomocysteine nucleosidase (Haemophilus influenzae (strain 86-028NP)).